The sequence spans 210 residues: Probable GTP-binding protein EngB (210 aa).

The EngB-type G domain maps to 22-198; the sequence is FLPEYAFIGR…LTYIDEVNQE (177 aa). Residues 30-37, 57-61, 75-78, 142-145, and 177-179 contribute to the GTP site; these read GRSNVGKS, GKTQL, DLPG, TKAD, and TSS. Residues Ser37 and Thr59 each coordinate Mg(2+).

The protein belongs to the TRAFAC class TrmE-Era-EngA-EngB-Septin-like GTPase superfamily. EngB GTPase family. Mg(2+) serves as cofactor.

Necessary for normal cell division and for the maintenance of normal septation. This chain is Probable GTP-binding protein EngB, found in Flavobacterium johnsoniae (strain ATCC 17061 / DSM 2064 / JCM 8514 / BCRC 14874 / CCUG 350202 / NBRC 14942 / NCIMB 11054 / UW101) (Cytophaga johnsonae).